Reading from the N-terminus, the 227-residue chain is Isopentenyl-diphosphate Delta-isomerase 1 (227 aa).

Position 36 (Lys36) interacts with substrate. His40 and His51 together coordinate Mg(2+). Positions 49 to 199 (LLHRAFSVFL…EIKITPWFKI (151 aa)) constitute a Nudix hydrolase domain. Residues Arg70 and Lys74 each coordinate substrate. Residue Cys86 is part of the active site. Ser87 provides a ligand contact to substrate. Mg(2+) contacts are provided by Glu146 and Glu148. Residue Glu148 is part of the active site. Lys176 carries the post-translational modification N6-acetyllysine. Positions 225-227 (YRI) match the Microbody targeting signal motif.

Belongs to the IPP isomerase type 1 family. In terms of assembly, monomer. Mg(2+) is required as a cofactor.

It is found in the peroxisome. It carries out the reaction isopentenyl diphosphate = dimethylallyl diphosphate. It functions in the pathway isoprenoid biosynthesis; dimethylallyl diphosphate biosynthesis; dimethylallyl diphosphate from isopentenyl diphosphate: step 1/1. Catalyzes the 1,3-allylic rearrangement of the homoallylic substrate isopentenyl (IPP) to its highly electrophilic allylic isomer, dimethylallyl diphosphate (DMAPP). The chain is Isopentenyl-diphosphate Delta-isomerase 1 (IDI1) from Pongo abelii (Sumatran orangutan).